The primary structure comprises 123 residues: UPF0102 protein PFL_5073 (123 aa).

It belongs to the UPF0102 family.

The chain is UPF0102 protein PFL_5073 from Pseudomonas fluorescens (strain ATCC BAA-477 / NRRL B-23932 / Pf-5).